Here is a 137-residue protein sequence, read N- to C-terminus: Small ribosomal subunit protein uS9c (137 aa).

The protein belongs to the universal ribosomal protein uS9 family.

It localises to the plastid. Its subcellular location is the chloroplast. The protein is Small ribosomal subunit protein uS9c (rps9) of Mesostigma viride (Green alga).